A 315-amino-acid chain; its full sequence is MAQLGGAANRAPTASLAPTSQSLRCAPQPRPSRADTGSLGRYWGKAAAAASREHPFPGTLMHSAAGSGRRRGALRELLGLQRAAPAGWLSEERAEELGGPSGPGSSRLCLEPREHAWILAAAEGRYEVLRELLEAEPELLLRGDPITGYSVLHWLAKHGRHEELILVHDFALRRGLRLDVSAPGSGGLTPLHLAALQGHDMVIKVLVGALGADATRRDHSGHRACHYLRPDAPWRLRELSGAEEWEMESGSGCTNLNNNSSGTTAWRAASAVGATAVETSRRVAASRTKAKDTAGSRVAQMHSLFRHLFPSFQDR.

The segment at 1–39 (MAQLGGAANRAPTASLAPTSQSLRCAPQPRPSRADTGSL) is disordered. 3 ANK repeats span residues 112–141 (PREH…ELLL), 147–162 (TGYS…GRHE), and 186–216 (GGLT…DATR).

Belongs to the SOWAH family.

The sequence is that of Ankyrin repeat domain-containing protein SOWAHD (SOWAHD) from Homo sapiens (Human).